A 76-amino-acid chain; its full sequence is ATP synthase subunit 9, mitochondrial (76 aa).

Methionine 1 is modified (N-formylmethionine). 2 helical membrane passes run 14-34 and 52-72; these read LASI…AALI and ILGF…AFLL.

As to quaternary structure, F-type ATP synthases have 2 components, the catalytic core F(1) and the membrane-embedded component F(0), linked together by a central stalk and a peripheral stalk. The central stalk, also called rotor shaft, is often seen as part of F(1). The peripheral stalk is seen as part of F(0). F(0) contains the membrane channel next to the rotor. F-type ATP synthases form dimers but each monomer functions independently in ATP generation. The dimer consists of 17 different polypeptides: ATP1 (subunit alpha, 3 molecules per monomer, part of F(1)), ATP2 (subunit beta, 3 copies per monomer, part of F(1)), ATP3 (subunit gamma, part of the central stalk), ATP4 (subunit b, part of the peripheral stalk), ATP5/OSCP (subunit 5/OSCP, part of the peripheral stalk), ATP6 (subunit a, part of the peripheral stalk), ATP7 (subunit d, part of the peripheral stalk), ATP8 (subunit 8, part of the peripheral stalk), OLI1 (subunit c, part of the rotor, 10 molecules per monomer), ATP14 (subunit h, part of the peripheral stalk), ATP15 (subunit epsilon, part of the central stalk), ATP16 (subunit delta, part of the central stalk), ATP17 (subunit f, part of the peripheral stalk), ATP18 (subunit i/j, part of the peripheral stalk), ATP19 (subunit k, dimer-specific, at interface between monomers), ATP20 (subunit g, at interface between monomers), TIM11 (subunit e, at interface between monomers).

It is found in the mitochondrion inner membrane. Functionally, mitochondrial membrane ATP synthase (F(1)F(0) ATP synthase or Complex V) produces ATP from ADP in the presence of a proton gradient across the membrane which is generated by electron transport complexes of the respiratory chain. F-type ATP synthases consist of two structural domains, F(1) - containing the extramembraneous catalytic core, and F(0) - containing the membrane proton channel, linked together by a central stalk and a peripheral stalk. During catalysis, ATP synthesis in the catalytic domain of F(1) is coupled via a rotary mechanism of the central stalk subunits to proton translocation. Part of the complex F(0) domain. A homomeric c-ring of 10 OLI1/ATP9 subunits is part of the complex rotary element. This is ATP synthase subunit 9, mitochondrial from Yarrowia lipolytica (strain CLIB 122 / E 150) (Yeast).